Here is a 206-residue protein sequence, read N- to C-terminus: Ras-related protein Rab-18 (206 aa).

N-acetylmethionine is present on Met-1. GTP is bound by residues Ser-17, Gly-20, Lys-21, Ser-22, Ser-23, Asp-34, Pro-35, Thr-40, Gly-66, Lys-123, and Asp-125. Ser-22 contacts Mg(2+). Short sequence motifs (switch) lie at residues 31–45 (DTFD…GVDF) and 63–80 (DTAG…YYRG). Thr-40 serves as a coordination point for Mg(2+). A Phosphoserine modification is found at Ser-144. Ala-152 serves as a coordination point for GTP. The S-palmitoyl cysteine moiety is linked to residue Cys-199. The residue at position 203 (Cys-203) is a Cysteine methyl ester. Cys-203 carries S-geranylgeranyl cysteine lipidation. Positions 204–206 (SVL) are cleaved as a propeptide — removed in mature form.

Belongs to the small GTPase superfamily. Rab family. As to quaternary structure, interacts (in GTP-bound form) with ZFYVE1. Interacts with ZW10 and this interaction is enhanced in the presence of ZFYVE1. Interacts with BSCL2. Mg(2+) serves as cofactor.

It localises to the endoplasmic reticulum membrane. The protein localises to the golgi apparatus. The protein resides in the cis-Golgi network membrane. It is found in the lipid droplet. Its subcellular location is the apical cell membrane. The enzyme catalyses GTP + H2O = GDP + phosphate + H(+). Regulated by guanine nucleotide exchange factors (GEFs) which promote the exchange of bound GDP for free GTP. Regulated by GTPase activating proteins (GAPs) which increase the GTP hydrolysis activity at the ER membrane. Inhibited by GDP dissociation inhibitors (GDIs) which prevent Rab-GDP dissociation. The small GTPases Rab are key regulators of intracellular membrane trafficking, from the formation of transport vesicles to their fusion with membranes. Rabs cycle between an inactive GDP-bound form and an active GTP-bound form that is able to recruit to membranes different sets of downstream effectors directly responsible for vesicle formation, movement, tethering and fusion. RAB18 is required for the localization of ZFYVE1 to lipid droplets and for its function in mediating the formation of endoplasmic reticulum-lipid droplets (ER-LD) contacts. Also required for maintaining endoplasmic reticulum structure. Plays a role in apical endocytosis/recycling. Plays a key role in eye and brain development and neurodegeneration. The chain is Ras-related protein Rab-18 (RAB18) from Bos taurus (Bovine).